The primary structure comprises 1065 residues: Presequence protease, mitochondrial (1065 aa).

Residues 1 to 42 constitute a mitochondrion transit peptide; the sequence is MLRSFSGAGKCKCRIPVSRQPVCGRSLRISSTLTPWNQSRRA. His117 lines the Zn(2+) pocket. Glu120 (proton acceptor) is an active-site residue. His121 provides a ligand contact to Zn(2+). The active site involves Glu193. Glu230 contributes to the Zn(2+) binding site.

The protein belongs to the peptidase M16 family. PreP subfamily. In terms of assembly, monomer and homodimer; homodimerization is induced by binding of the substrate. Requires Zn(2+) as cofactor.

The protein resides in the mitochondrion intermembrane space. It is found in the mitochondrion matrix. Functionally, degrades mitochondrial transit peptides after their cleavage in the intermembrane space or in the matrix, and presequence peptides; clearance of these peptides is required to keep the presequence processing machinery running. Preferentially cleaves the N-terminal side of paired basic amino acid residues. Also degrades other unstructured peptides. May function as an ATP-dependent peptidase as opposed to a metalloendopeptidase. The protein is Presequence protease, mitochondrial (cym1) of Aspergillus fumigatus (strain ATCC MYA-4609 / CBS 101355 / FGSC A1100 / Af293) (Neosartorya fumigata).